We begin with the raw amino-acid sequence, 551 residues long: Adenine deaminase (551 aa).

This sequence belongs to the metallo-dependent hydrolases superfamily. Adenine deaminase family. Mn(2+) serves as cofactor.

The enzyme catalyses adenine + H2O + H(+) = hypoxanthine + NH4(+). The protein is Adenine deaminase of Leuconostoc citreum (strain KM20).